Here is a 684-residue protein sequence, read N- to C-terminus: Acetyl-coenzyme A synthetase 2 (684 aa).

CoA is bound by residues 207–210 and threonine 326; that span reads RGGK. ATP-binding positions include 402 to 404, 426 to 431, aspartate 517, and arginine 532; these read GEP and DTMWQT. Serine 540 provides a ligand contact to CoA. Arginine 543 is an ATP binding site. Arginine 613 is a binding site for CoA.

Belongs to the ATP-dependent AMP-binding enzyme family.

It carries out the reaction acetate + ATP + CoA = acetyl-CoA + AMP + diphosphate. The sequence is that of Acetyl-coenzyme A synthetase 2 (ACS2) from Kluyveromyces lactis (strain ATCC 8585 / CBS 2359 / DSM 70799 / NBRC 1267 / NRRL Y-1140 / WM37) (Yeast).